A 701-amino-acid polypeptide reads, in one-letter code: Polyphosphate kinase (701 aa).

Asn45 provides a ligand contact to ATP. Residues Arg373 and Arg403 each coordinate Mg(2+). In terms of domain architecture, PLD phosphodiesterase 1 spans 428 to 462 (PGMKIHAKLLLITRKEGDEFVRYAHIGTGNFHERT). The Phosphohistidine intermediate role is filled by His433. 3 residues coordinate ATP: Tyr466, Arg562, and His590. The PLD phosphodiesterase 2 domain occupies 585–615 (DRFLEHPRVLVVHNDGNPQVFISSADWMERN).

Belongs to the polyphosphate kinase 1 (PPK1) family. Requires Mg(2+) as cofactor. Post-translationally, an intermediate of this reaction is the autophosphorylated ppk in which a phosphate is covalently linked to a histidine residue through a N-P bond.

It carries out the reaction [phosphate](n) + ATP = [phosphate](n+1) + ADP. In terms of biological role, catalyzes the reversible transfer of the terminal phosphate of ATP to form a long-chain polyphosphate (polyP). This chain is Polyphosphate kinase, found in Vibrio cholerae serotype O1 (strain ATCC 39315 / El Tor Inaba N16961).